The primary structure comprises 280 residues: Exfoliative toxin A (280 aa).

The signal sequence occupies residues 1–38 (MNNSKIISKVLLSLSLFTVGASAFVIQDELMQKNHAKA). Active-site charge relay system residues include histidine 110, aspartate 158, and serine 233.

The protein belongs to the peptidase S1B family. Ca(2+) serves as cofactor.

Has serine protease-like properties and binds to the skin protein profilaggrin. Cleaves substrates after acidic residues. Exfoliative toxins cause impetigous diseases commonly referred as staphylococcal scalded skin syndrome (SSSS). In Staphylococcus aureus, this protein is Exfoliative toxin A (eta).